A 287-amino-acid chain; its full sequence is 1-acyl-sn-glycerol-3-phosphate acyltransferase alpha (287 aa).

The N-terminal stretch at 1 to 26 (MELWPGAGTLLLLLFLLLLLLLPTLW) is a signal peptide. At 27–37 (FCSPSAKYFFK) the chain is on the lumenal side. Residues 38 to 58 (MAFYNGWILFLAVLAIPVCAV) traverse the membrane as a helical segment. Residues 59–127 (RGRNVENMKI…PGRCVPIAKR (69 aa)) lie on the Cytoplasmic side of the membrane. The HXXXXD motif signature appears at 104 to 109 (HQSSLD). The chain crosses the membrane as a helical span at residues 128-148 (ELLWAGSAGLACWLAGVIFID). Topologically, residues 149-287 (RKRTGDAISV…KPGGVGEAGL (139 aa)) are lumenal. The short motif at 178–181 (EGTR) is the EGTR motif element.

Belongs to the 1-acyl-sn-glycerol-3-phosphate acyltransferase family.

It localises to the endoplasmic reticulum membrane. It catalyses the reaction a 1-acyl-sn-glycero-3-phosphate + an acyl-CoA = a 1,2-diacyl-sn-glycero-3-phosphate + CoA. The catalysed reaction is 1-(9Z-octadecenoyl)-sn-glycero-3-phosphate + (9Z)-octadecenoyl-CoA = 1,2-di-(9Z-octadecenoyl)-sn-glycero-3-phosphate + CoA. The enzyme catalyses 1-(9Z-octadecenoyl)-sn-glycero-3-phosphate + hexadecanoyl-CoA = 1-(9Z)-octadecenoyl-2-hexadecanoyl-sn-glycero-3-phosphate + CoA. It carries out the reaction heptadecanoyl-CoA + 1-(9Z-octadecenoyl)-sn-glycero-3-phosphate = 1-(9Z)-octadecenoyl-2-heptadecanoyl-sn-glycero-3-phosphate + CoA. It catalyses the reaction 1-(9Z-octadecenoyl)-sn-glycero-3-phosphate + octadecanoyl-CoA = 1-(9Z-octadecenoyl)-2-octadecanoyl-sn-glycero-3-phosphate + CoA. The catalysed reaction is 1-(9Z-octadecenoyl)-sn-glycero-3-phosphate + (9Z,12Z)-octadecadienoyl-CoA = 1-(9Z)-octadecenoyl-2-(9Z,12Z)-octadecadienoyl-sn-glycero-3-phosphate + CoA. The enzyme catalyses 1-(9Z-octadecenoyl)-sn-glycero-3-phosphate + tetradecanoyl-CoA = 1-(9Z)-octadecenoyl-2-tetradecanoyl-sn-glycero-3-phosphate + CoA. It carries out the reaction pentadecanoyl-CoA + 1-(9Z-octadecenoyl)-sn-glycero-3-phosphate = 1-(9Z)-octadecenoyl-2-pentadecanoyl-sn-glycero-3-phosphate + CoA. It catalyses the reaction 1-hexadecanoyl-sn-glycero-3-phosphate + (9Z)-octadecenoyl-CoA = 1-hexadecanoyl-2-(9Z-octadecenoyl)-sn-glycero-3-phosphate + CoA. The catalysed reaction is 1-(9Z,12Z,15Z)-octadecatrienoyl-sn-glycero-3-phosphate + (9Z)-octadecenoyl-CoA = 1-(9Z,12Z,15Z)-octadecatrienoyl-2-(9Z)-octadecenoyl-sn-glycero-3-phosphate + CoA. The enzyme catalyses 1-(6Z,9Z,12Z-octadecatrienoyl)-sn-glycero-3-phosphate + (9Z)-octadecenoyl-CoA = (6Z,9Z,12Z)-octadecatrienoyl-2-(9Z)-octadecenoyl-sn-glycero-3-phosphate + CoA. It carries out the reaction 1-eicosanoyl-sn-glycero-3-phosphate + (9Z)-octadecenoyl-CoA = 1-eicosanoyl-2-(9Z)-octadecenoyl-sn-glycero-3-phosphate + CoA. It catalyses the reaction 1-tetradecanoyl-sn-glycerol 3-phosphate + (9Z)-octadecenoyl-CoA = 1-tetradecanoyl-2-(9Z)-octadecenoyl-sn-glycero-3-phosphate + CoA. The catalysed reaction is 1-(9Z-octadecenoyl)-sn-glycero-3-phosphate + (5Z,8Z,11Z,14Z)-eicosatetraenoyl-CoA = 1-(9Z)-octadecenoyl-2-(5Z,8Z,11Z,14Z)-eicosatetraenoyl-sn-glycero-3-phosphate + CoA. The enzyme catalyses 1-(9Z-octadecenoyl)-sn-glycero-3-phosphate + dodecanoyl-CoA = 1-(9Z)-octadecenoyl-2-dodecanoyl-sn-glycero-3-phosphate + CoA. It carries out the reaction (6Z)-octadecenoyl-CoA + 1-(9Z-octadecenoyl)-sn-glycero-3-phosphate = 1-(9Z)-octadecenoyl-2-(6Z)-octadecenoyl-sn-glycero-3-phosphate + CoA. It catalyses the reaction (11Z)-octadecenoyl-CoA + 1-(9Z-octadecenoyl)-sn-glycero-3-phosphate = 1-(9Z)-octadecenoyl-2-(11Z)-octadecenoyl-sn-glycero-3-phosphate + CoA. The catalysed reaction is (9Z)-hexadecenoyl-CoA + 1-(9Z-octadecenoyl)-sn-glycero-3-phosphate = 1-(9Z-octadecenoyl)-2-(9Z-hexadecenoyl)-sn-glycero-3-phosphate + CoA. It participates in phospholipid metabolism; CDP-diacylglycerol biosynthesis; CDP-diacylglycerol from sn-glycerol 3-phosphate: step 2/3. In terms of biological role, converts 1-acyl-sn-glycerol-3-phosphate (lysophosphatidic acid or LPA) into 1,2-diacyl-sn-glycerol-3-phosphate (phosphatidic acid or PA) by incorporating an acyl moiety at the sn-2 position of the glycerol backbone. The protein is 1-acyl-sn-glycerol-3-phosphate acyltransferase alpha (AGPAT1) of Bos taurus (Bovine).